An 863-amino-acid chain; its full sequence is Axin-1 (863 aa).

The tract at residues 1–81 (MNVQEQGFPL…PEGSASPTPP (81 aa)) is disordered. The Tankyrase-binding motif signature appears at 20 to 29 (APRPPVPGEE). Residues 34–61 (STDSRPVNHSFCSGKGTSIKSETSTATP) show a composition bias toward polar residues. Ser75 is modified (phosphoserine). The residue at position 77 (Ser77) is a Phosphoserine; by CK1. The RGS domain maps to 88-211 (SLHSLLDDQD…LKSDIYLEYT (124 aa)). The interaction with TP53 stretch occupies residues 209-338 (EYTRTGSESP…DADTLSLTDS (130 aa)). Disordered regions lie at residues 215 to 240 (SESPKVCSDQSSGSGTGKGMSGYLPT), 249 to 268 (CDQDADEDDGRDPLPPSRLT), and 315 to 344 (ATSANDSEQQSLSSDADTLSLTDSSVDGIP). Ser217 carries the post-translational modification Phosphoserine. Positions 249 to 258 (CDQDADEDDG) are enriched in acidic residues. The segment covering 325–339 (SLSSDADTLSLTDSS) has biased composition (low complexity). The interaction with GSK3B stretch occupies residues 348–432 (IRKQHRREMQ…EDGEMPSGPM (85 aa)). The tract at residues 353–411 (RREMQESIQVNGRVPLPHIPRTYRMPKEIRVEPQKFAEELIHRLEAVQRTREAEEKLEE) is interaction with SIAH1. The interaction with beta-catenin stretch occupies residues 433–501 (ASHKLPSVPA…SPDSGHVAKT (69 aa)). Ser468 carries the phosphoserine; by CK1 modification. Thr480 bears the Phosphothreonine; by GSK3-beta mark. Position 485 is a phosphoserine; by GSK3-beta (Ser485). 2 positions are modified to phosphoserine: Ser492 and Ser509. An interaction with RNF111 region spans residues 505 to 758 (GGTASGHGKH…PVLSVVPAVS (254 aa)). Positions 529-542 (HHRHVHHHVHHNSA) are enriched in basic residues. Disordered regions lie at residues 529–624 (HHRH…DAEK) and 642–664 (HRKAGHGSSGLRKQQAHESSRPL). Residues 543–554 (RPKEQMEAEVAR) are compositionally biased toward basic and acidic residues. Residues 572 to 790 (PRSYSENAGT…CDSIVVAYYF (219 aa)) form an interaction with PPP2CA region. Positions 575–584 (YSENAGTTLS) are enriched in polar residues. The interaction with HIPK2 stretch occupies residues 678-753 (AQLRNSVQPS…RPACAPVLSV (76 aa)). In terms of domain architecture, DIX spans 781-863 (CDSIVVAYYF…KIIGKVEKVD (83 aa)). Glycyl lysine isopeptide (Lys-Gly) (interchain with G-Cter in SUMO) cross-links involve residues Lys858 and Lys861.

In terms of assembly, homodimer. Component of the beta-catenin destruction complex, containing at least CTNNB1, an axin and GSK3B, that regulates CTNNB1 protein levels through phosphorylation and ubiquitination. Interacts with GSK3B; the interaction hyperphosphorylates CTNNB1 leading to its ubiquitination and destruction. Interacts with DAXX; the interaction stimulates the interaction of DAXX with TP53, stimulates 'Ser-46' phosphorylation of TP53 and induces cell death on UV irradiation. Also interacts with APC, RNF111, SMAD6 and SMAD7. Interacts (via the C-terminal) with PPP1CA; the interaction dephosphorylates AXIN1 and regulates interaction with GSK3B. Interacts with PPP2CA; the interaction dephosphorylates AXIN1. Interacts with MDFI; the interaction decreases AXIN1-mediated JUN N-terminal kinase (JNK) activation. Interacts with MDFIC; the interaction inhibits beta-cateninin-mediated signaling and AXIN1-mediated JUN N-terminal kinase (JNK) activation. Binds ANKRD6, PIAS1, PIAS2, PIAS4, SUMO1, MAP3K1 and MAP3K4. Component of the AXIN1-HIPK2-TP53 complex. Interacts directly in the complex with TP53 and HIPK2. Interacts with DIXDC1; the interaction prevents interaction with MAP3K1. Interacts with AIDA; the interaction blocks the AXIN1-mediated JNK activation through disrupting AXIN1 homodimerization and Wnt signaling. Interacts with LRP5 (via its phosphorylated PPPSP motifs); the interaction is stimulated by WNT1 and GSK3B and activates beta-catenin signaling. Interacts with CTNNB1 (via the armadillo repeats 2-7). Interacts with MACF1. Found in a complex composed of MACF1, APC, AXIN1, CTNNB1 and GSK3B. Interacts with TNKS. Interacts with DAB2; the interaction is mutually exclusive with the AXIN1:PPP1CA interaction. Interacts with ZBED3 (via PPPSP motif); the interaction is direct, enhanced by protein kinase GSK3B and casein kinase CSNK1E activities and decreases GSK3B-induced beta-catenin serine and threonine phosphorylations. Interacts with WDR26. Interacts with GID8. Interacts with SIAH1 and SIAH2; both probably catalyze AXIN1 ubiquitination and subsequent proteasome-mediated ubiquitin-dependent degradation. Interaction with GSK3B and AXIN1 is competitive. In terms of processing, phosphorylation and dephosphorylation of AXIN1 regulates assembly and function of the beta-catenin complex. Phosphorylated by CK1 and GSK3B. Dephosphorylated by PPP1CA and PPP2CA. Phosphorylation by CK1 enhances binding of GSK3B to AXIN1. Also phosphorylated by CDK2 which regulates interaction with CTNBB1. Post-translationally, ADP-ribosylated by tankyrase TNKS and TNKS2. Poly-ADP-ribosylated protein is recognized by RNF146, followed by ubiquitination and subsequent activation of the Wnt signaling pathway. Ubiquitinated by RNF146 when poly-ADP-ribosylated, leading to its degradation and subsequent activation of the Wnt signaling pathway. Deubiquitinated by USP34, deubiquitinated downstream of beta-catenin stabilization step: deubiquitination is important for nuclear accumulation during Wnt signaling to positively regulate beta-catenin (CTNBB1)-mediated transcription. Sumoylation at Lys-858 and Lys-861 prevents ubiquitination and degradation. Sumoylation is required for AXIN1-mediated JNK activation. Ubiquitination by SIAH1 and SIAH2 induces its proteasomal degradation as part of the activation of the Wnt signaling pathway. In terms of tissue distribution, expressed in embryonic stem cells.

The protein localises to the cytoplasm. The protein resides in the nucleus. Its subcellular location is the cell membrane. It localises to the membrane. Its function is as follows. Component of the beta-catenin destruction complex required for regulating CTNNB1 levels through phosphorylation and ubiquitination, and modulating Wnt-signaling. Controls dorsoventral patterning via two opposing effects; down-regulates CTNNB1 to inhibit the Wnt signaling pathway and ventralize embryos, but also dorsalizes embryos by activating a Wnt-independent JNK signaling pathway. In Wnt signaling, probably facilitates the phosphorylation of CTNNB1 and APC by GSK3B. Likely to function as a tumor suppressor. Facilitates the phosphorylation of TP53 by HIPK2 upon ultraviolet irradiation. Enhances TGF-beta signaling by recruiting the RNF111 E3 ubiquitin ligase and promoting the degradation of inhibitory SMAD7. Also a component of the AXIN1-HIPK2-TP53 complex which controls cell growth, apoptosis and development. This Mus musculus (Mouse) protein is Axin-1 (Axin1).